The primary structure comprises 180 residues: Cytokinin-beta-glucosidase 1 (180 aa).

Its function is as follows. Hydrolyzes cytokinin glucosides thus liberating free cytokinins. The polypeptide is Cytokinin-beta-glucosidase 1 (ROLC1) (Linaria vulgaris (Toadflax)).